We begin with the raw amino-acid sequence, 179 residues long: Adenine phosphoribosyltransferase (179 aa).

Belongs to the purine/pyrimidine phosphoribosyltransferase family. As to quaternary structure, homodimer.

It localises to the cytoplasm. The catalysed reaction is AMP + diphosphate = 5-phospho-alpha-D-ribose 1-diphosphate + adenine. The protein operates within purine metabolism; AMP biosynthesis via salvage pathway; AMP from adenine: step 1/1. Catalyzes a salvage reaction resulting in the formation of AMP, that is energically less costly than de novo synthesis. This Helicobacter acinonychis (strain Sheeba) protein is Adenine phosphoribosyltransferase.